A 340-amino-acid polypeptide reads, in one-letter code: tRNA (cytosine(34)-C(5))-methyltransferase, mitochondrial (340 aa).

S-adenosyl-L-methionine-binding positions include 139 to 145, E162, D193, and D211; that span reads CAAPGGK. Residue C265 is the Nucleophile of the active site.

The protein belongs to the class I-like SAM-binding methyltransferase superfamily. RsmB/NOP family.

The protein localises to the mitochondrion matrix. The enzyme catalyses cytidine(34) in mitochondrial tRNA + S-adenosyl-L-methionine = 5-methylcytidine(34) in mitochondrial tRNA + S-adenosyl-L-homocysteine + H(+). Mitochondrial tRNA methyltransferase that mediates methylation of cytosine to 5-methylcytosine (m5C) at position 34 of mt-tRNA(Met). mt-tRNA(Met) methylation at cytosine(34) takes place at the wobble position of the anticodon and initiates the formation of 5-formylcytosine (f(5)c) at this position. mt-tRNA(Met) containing the f(5)c modification at the wobble position enables recognition of the AUA codon in addition to the AUG codon, expanding codon recognition in mitochondrial translation. The protein is tRNA (cytosine(34)-C(5))-methyltransferase, mitochondrial of Homo sapiens (Human).